The sequence spans 138 residues: Succinate dehydrogenase assembly factor 4, mitochondrial (138 aa).

Residues 1 to 32 (MLCAIKSTGYRYPRTGALNLLRGRPFNMATRK) constitute a mitochondrion transit peptide. Residues 71–98 (QATGDRTKESLNSPLLTKNDIGSFSPEF) show a composition bias toward polar residues. The interval 71–138 (QATGDRTKES…YSFNGRVTDF (68 aa)) is disordered.

It belongs to the SDHAF4 family. In terms of assembly, interacts with SDH1 in its FAD-bound form.

The protein resides in the mitochondrion matrix. In terms of biological role, plays an essential role in the assembly of succinate dehydrogenase (SDH), an enzyme complex (also referred to as respiratory complex II) that is a component of both the tricarboxylic acid (TCA) cycle and the mitochondrial electron transport chain, and which couples the oxidation of succinate to fumarate with the reduction of ubiquinone (coenzyme Q) to ubiquinol. Binds to the flavoprotein subunit SDH1 in its FAD-bound form, blocking the generation of excess reactive oxygen species (ROS) and facilitating its assembly with the iron-sulfur protein subunit SDH2 into the SDH catalytic dimer. The polypeptide is Succinate dehydrogenase assembly factor 4, mitochondrial (Saccharomyces cerevisiae (strain ATCC 204508 / S288c) (Baker's yeast)).